A 90-amino-acid polypeptide reads, in one-letter code: Small ribosomal subunit protein bS20 (90 aa).

Positions M1–S10 are enriched in polar residues. The tract at residues M1–K25 is disordered.

Belongs to the bacterial ribosomal protein bS20 family.

Functionally, binds directly to 16S ribosomal RNA. This Orientia tsutsugamushi (strain Boryong) (Rickettsia tsutsugamushi) protein is Small ribosomal subunit protein bS20.